A 314-amino-acid polypeptide reads, in one-letter code: Methionyl-tRNA formyltransferase (314 aa).

Residue 113–116 (SILP) coordinates (6S)-5,6,7,8-tetrahydrofolate.

It belongs to the Fmt family.

The catalysed reaction is L-methionyl-tRNA(fMet) + (6R)-10-formyltetrahydrofolate = N-formyl-L-methionyl-tRNA(fMet) + (6S)-5,6,7,8-tetrahydrofolate + H(+). Attaches a formyl group to the free amino group of methionyl-tRNA(fMet). The formyl group appears to play a dual role in the initiator identity of N-formylmethionyl-tRNA by promoting its recognition by IF2 and preventing the misappropriation of this tRNA by the elongation apparatus. This chain is Methionyl-tRNA formyltransferase, found in Photobacterium profundum (strain SS9).